We begin with the raw amino-acid sequence, 200 residues long: Snake venom metalloproteinase BmooMP-I (200 aa).

One can recognise a Peptidase M12B domain in the interval 5–200; the sequence is RYIELAVVAD…HNPQCILNEP (196 aa). 2 residues coordinate Ca(2+): Glu-8 and Asp-92. Disulfide bonds link Cys-116–Cys-195, Cys-155–Cys-179, and Cys-157–Cys-162. His-141 contacts Zn(2+). Residue Glu-142 is part of the active site. The Zn(2+) site is built by His-145 and His-151. Residues Cys-195 and Asn-198 each contribute to the Ca(2+) site.

Belongs to the venom metalloproteinase (M12B) family. P-I subfamily. As to quaternary structure, monomer. It depends on Zn(2+) as a cofactor. In terms of tissue distribution, expressed by the venom gland.

It is found in the secreted. In terms of biological role, zinc metalloprotease that displays fibrinogenolytic, gelatinase and weak hemorrhagic activities. Degrades the three chain of fibrinogen Aalpha-chain (FGA), Bbeta-chain (FGB), and gamma (FGG). In Bothrops moojeni (Lance-headed viper), this protein is Snake venom metalloproteinase BmooMP-I.